A 238-amino-acid polypeptide reads, in one-letter code: LexA repressor (238 aa).

The segment at residues 26–46 is a DNA-binding region (H-T-H motif); it reads FDEMKDALDLASKSGIHRLIT. Active-site for autocatalytic cleavage activity residues include Ser158 and Lys196.

This sequence belongs to the peptidase S24 family. Homodimer.

The enzyme catalyses Hydrolysis of Ala-|-Gly bond in repressor LexA.. Its function is as follows. Represses a number of genes involved in the response to DNA damage (SOS response), including recA and lexA. In the presence of single-stranded DNA, RecA interacts with LexA causing an autocatalytic cleavage which disrupts the DNA-binding part of LexA, leading to derepression of the SOS regulon and eventually DNA repair. The polypeptide is LexA repressor (Rhizobium meliloti (strain 1021) (Ensifer meliloti)).